A 658-amino-acid chain; its full sequence is Exoribonuclease 2 (658 aa).

Residues 189–531 (REDLTALHFI…NHRLIKAVLT (343 aa)) enclose the RNB domain. An S1 motif domain is found at 576–658 (KPTFQAEIQD…ETRSIVGTLC (83 aa)).

Belongs to the RNR ribonuclease family. RNase II subfamily.

It localises to the cytoplasm. It carries out the reaction Exonucleolytic cleavage in the 3'- to 5'-direction to yield nucleoside 5'-phosphates.. Involved in mRNA degradation. Hydrolyzes single-stranded polyribonucleotides processively in the 3' to 5' direction. This Pasteurella multocida (strain Pm70) protein is Exoribonuclease 2.